The sequence spans 241 residues: Probable phosphatase Cthe_0111 (241 aa).

Zn(2+) is bound by residues His8, His10, His16, His41, Glu74, His102, His132, Asp192, and His194.

This sequence belongs to the PHP family. Requires Zn(2+) as cofactor.

In Acetivibrio thermocellus (strain ATCC 27405 / DSM 1237 / JCM 9322 / NBRC 103400 / NCIMB 10682 / NRRL B-4536 / VPI 7372) (Clostridium thermocellum), this protein is Probable phosphatase Cthe_0111.